The following is a 490-amino-acid chain: Bifunctional protein HldE (490 aa).

Positions 1–330 (MLDFEAVLPA…RKVLPPASLA (330 aa)) are ribokinase. 205–208 (NRKE) contacts ATP. Residue aspartate 275 is part of the active site. Residues 358–490 (FTNGCFDILH…LVARAQNGKA (133 aa)) form a cytidylyltransferase region.

It in the N-terminal section; belongs to the carbohydrate kinase PfkB family. This sequence in the C-terminal section; belongs to the cytidylyltransferase family. In terms of assembly, homodimer.

It catalyses the reaction D-glycero-beta-D-manno-heptose 7-phosphate + ATP = D-glycero-beta-D-manno-heptose 1,7-bisphosphate + ADP + H(+). The enzyme catalyses D-glycero-beta-D-manno-heptose 1-phosphate + ATP + H(+) = ADP-D-glycero-beta-D-manno-heptose + diphosphate. Its pathway is nucleotide-sugar biosynthesis; ADP-L-glycero-beta-D-manno-heptose biosynthesis; ADP-L-glycero-beta-D-manno-heptose from D-glycero-beta-D-manno-heptose 7-phosphate: step 1/4. It participates in nucleotide-sugar biosynthesis; ADP-L-glycero-beta-D-manno-heptose biosynthesis; ADP-L-glycero-beta-D-manno-heptose from D-glycero-beta-D-manno-heptose 7-phosphate: step 3/4. Catalyzes the phosphorylation of D-glycero-D-manno-heptose 7-phosphate at the C-1 position to selectively form D-glycero-beta-D-manno-heptose-1,7-bisphosphate. In terms of biological role, catalyzes the ADP transfer from ATP to D-glycero-beta-D-manno-heptose 1-phosphate, yielding ADP-D-glycero-beta-D-manno-heptose. The protein is Bifunctional protein HldE of Rhodopseudomonas palustris (strain BisB18).